Here is a 512-residue protein sequence, read N- to C-terminus: Maturase K (512 aa).

This sequence belongs to the intron maturase 2 family. MatK subfamily.

It localises to the plastid. Its subcellular location is the chloroplast. Its function is as follows. Usually encoded in the trnK tRNA gene intron. Probably assists in splicing its own and other chloroplast group II introns. The polypeptide is Maturase K (Koelreuteria paniculata (Goldenrain tree)).